The sequence spans 1505 residues: Homeobox protein cut-like 1 (1505 aa).

Positions 56 to 407 (LLKSFQGEID…ALRISNSDLS (352 aa)) form a coiled coil. 2 stretches are compositionally biased toward polar residues: residues 396–407 (NAALRISNSDLS) and 440–451 (EQASNTNGTHQF). Disordered stretches follow at residues 396–455 (NAAL…SPAG), 512–552 (YSTN…EEMD), 646–669 (PKRR…GSDE), and 682–704 (LQVQ…NSDD). Positions 516-546 (SISSQSPLQQSPDVNGMAPSPSQSESAGSVS) are enriched in low complexity. At Glu-540 the chain carries Phosphoserine. Positions 542-629 (AGSVSEGEEM…ILALRSIQGR (88 aa)) form a DNA-binding region, CUT 1. Over residues 694–703 (SSASGSGNSD) the composition is skewed to low complexity. A Phosphoserine modification is found at Ser-763. The interval 768-802 (SAAPEAGASALPNPPALKKEAQDAPGLDPQGAADC) is disordered. Glycyl lysine isopeptide (Lys-Gly) (interchain with G-Cter in SUMO2) cross-links involve residues Lys-785, Lys-811, and Lys-842. A compositionally biased stretch (basic and acidic residues) spans 815–853 (GRSGAWKDHWWSAVQPERRNAASSEEAKAEETGGGKEKG). The disordered stretch occupies residues 815 to 930 (GRSGAWKDHW…KPTKPSVPPL (116 aa)). 2 stretches are compositionally biased toward polar residues: residues 868 to 877 (SQLQGPSSSE) and 887 to 911 (SPYS…NSPL). Phosphoserine is present on Ser-909. The CUT 2 DNA-binding region spans 934 to 1021 (QYEVYMYQEV…QGVLPVQGQQ (88 aa)). Positions 1036-1049 (LQQGCVSSESTPKT) are enriched in polar residues. The segment at 1036–1110 (LQQGCVSSES…QPTTPLPLSG (75 aa)) is disordered. Residues 1050–1066 (SASCSPAPESPMSSSES) show a composition bias toward low complexity. 2 positions are modified to phosphoserine: Ser-1059 and Ser-1069. Positions 1117-1204 (QELVAMSPEL…VEKLMDMKRM (88 aa)) form a DNA-binding region, CUT 3. The interval 1210-1247 (MKRRHSSVSDSQPCEPPSVGTEYSQGASPQPQHQLKKP) is disordered. The segment covering 1230 to 1242 (TEYSQGASPQPQH) has biased composition (polar residues). Positions 1244–1303 (LKKPRVVLAPEEKEALKRAYQQKPYPSPKTIEDLATQLNLKTSTVINWFHNYRSRIRREL) form a DNA-binding region, homeobox. Phosphoserine is present on Ser-1270. A Glycyl lysine isopeptide (Lys-Gly) (interchain with G-Cter in SUMO2) cross-link involves residue Lys-1284. The tract at residues 1312–1480 (SQGQAGASDS…SRDNPLRKKK (169 aa)) is disordered. Over residues 1316–1333 (AGASDSPSARSGRAAPSS) the composition is skewed to low complexity. At Ser-1337 the chain carries Phosphoserine. 2 stretches are compositionally biased toward basic and acidic residues: residues 1353 to 1368 (EEPK…EVPR) and 1384 to 1394 (DDARDDDHEGG). 2 stretches are compositionally biased toward low complexity: residues 1405 to 1436 (PASA…AAPS) and 1443 to 1455 (NSSS…RPSS). At Ser-1455 the chain carries Phosphoserine. Positions 1467-1476 (GARDSRDNPL) are enriched in basic and acidic residues. Residues Ser-1486 and Ser-1496 each carry the phosphoserine modification.

Belongs to the CUT homeobox family. As to quaternary structure, interacts with BANP. Interacts with SATB1 (via DNA-binding domains); the interaction inhibits the attachment of both proteins to DNA. In terms of processing, phosphorylated by PKA. Post-translationally, as cells progress into S phase, a fraction of CUX1 molecules is proteolytically processed into N-terminally truncated proteins of 110 kDa by CTSL. Cell cycle-dependent processing of CUX1 serves to generate a CDP/Cux p110 with distinct DNA binding and transcriptional properties.

Its subcellular location is the nucleus. Transcription factor involved in the control of neuronal differentiation in the brain. Regulates dendrite development and branching, and dendritic spine formation in cortical layers II-III. Also involved in the control of synaptogenesis. In addition, it has probably a broad role in mammalian development as a repressor of developmentally regulated gene expression. May act by preventing binding of positively-activing CCAAT factors to promoters. Component of nf-munr repressor; binds to the matrix attachment regions (MARs) (5' and 3') of the immunoglobulin heavy chain enhancer. Represses T-cell receptor (TCR) beta enhancer function by binding to MARbeta, an ATC-rich DNA sequence located upstream of the TCR beta enhancer. Binds to the TH enhancer; may require the basic helix-loop-helix protein TCF4 as a coactivator. Its function is as follows. Plays a role in cell cycle progression, in particular at the G1/S transition. As cells progress into S phase, a fraction of CUX1 molecules is proteolytically processed into N-terminally truncated proteins of 110 kDa. While CUX1 only transiently binds to DNA and carries the CCAAT-displacement activity, CDP/Cux p110 makes a stable interaction with DNA and stimulates expression of genes such as POLA1. In Homo sapiens (Human), this protein is Homeobox protein cut-like 1.